A 368-amino-acid chain; its full sequence is NAD(P)H-quinone oxidoreductase subunit 1, chloroplastic (368 aa).

The next 9 helical transmembrane spans lie at 11–31 (RVIN…LIWI), 33–53 (IYIL…VWLE), 98–118 (WLFS…YLVI), 131–151 (IGVF…LMAG), 177–197 (LALC…VDIV), 205–225 (FWGW…ISSL), 255–275 (FGLF…FVTI), 305–325 (VLGI…FLFI), and 348–368 (FLLP…LLLL).

It belongs to the complex I subunit 1 family. NDH is composed of at least 16 different subunits, 5 of which are encoded in the nucleus.

The protein localises to the plastid. It is found in the chloroplast thylakoid membrane. The enzyme catalyses a plastoquinone + NADH + (n+1) H(+)(in) = a plastoquinol + NAD(+) + n H(+)(out). It catalyses the reaction a plastoquinone + NADPH + (n+1) H(+)(in) = a plastoquinol + NADP(+) + n H(+)(out). Its function is as follows. NDH shuttles electrons from NAD(P)H:plastoquinone, via FMN and iron-sulfur (Fe-S) centers, to quinones in the photosynthetic chain and possibly in a chloroplast respiratory chain. The immediate electron acceptor for the enzyme in this species is believed to be plastoquinone. Couples the redox reaction to proton translocation, and thus conserves the redox energy in a proton gradient. The sequence is that of NAD(P)H-quinone oxidoreductase subunit 1, chloroplastic from Cycas taitungensis (Prince sago).